The following is a 431-amino-acid chain: Enolase (431 aa).

Gln-162 is a (2R)-2-phosphoglycerate binding site. Glu-204 (proton donor) is an active-site residue. The Mg(2+) site is built by Asp-241, Glu-288, and Asp-315. Positions 340, 369, 370, and 391 each coordinate (2R)-2-phosphoglycerate. Residue Lys-340 is the Proton acceptor of the active site.

It belongs to the enolase family. Requires Mg(2+) as cofactor.

The protein resides in the cytoplasm. It is found in the secreted. Its subcellular location is the cell surface. The enzyme catalyses (2R)-2-phosphoglycerate = phosphoenolpyruvate + H2O. It functions in the pathway carbohydrate degradation; glycolysis; pyruvate from D-glyceraldehyde 3-phosphate: step 4/5. Functionally, catalyzes the reversible conversion of 2-phosphoglycerate (2-PG) into phosphoenolpyruvate (PEP). It is essential for the degradation of carbohydrates via glycolysis. This is Enolase from Phocaeicola vulgatus (strain ATCC 8482 / DSM 1447 / JCM 5826 / CCUG 4940 / NBRC 14291 / NCTC 11154) (Bacteroides vulgatus).